We begin with the raw amino-acid sequence, 867 residues long: Protein translocase subunit SecA 1 (867 aa).

ATP-binding positions include Gln-86, 104 to 108 (GEGKT), and Asp-493.

The protein belongs to the SecA family. In terms of assembly, monomer and homodimer. Part of the essential Sec protein translocation apparatus which comprises SecA, SecYEG and auxiliary proteins SecDF. Other proteins may also be involved.

It localises to the cell membrane. The protein localises to the cytoplasm. The enzyme catalyses ATP + H2O + cellular proteinSide 1 = ADP + phosphate + cellular proteinSide 2.. Its function is as follows. Part of the Sec protein translocase complex. Interacts with the SecYEG preprotein conducting channel. Has a central role in coupling the hydrolysis of ATP to the transfer of proteins into and across the cell membrane, serving as an ATP-driven molecular motor driving the stepwise translocation of polypeptide chains across the membrane. The chain is Protein translocase subunit SecA 1 from Corynebacterium jeikeium (strain K411).